The primary structure comprises 549 residues: DDB1- and CUL4-associated factor 11 (549 aa).

Residues 1–24 (MGSRNSSSAGSGSLEPSEGLSRRG) show a composition bias toward low complexity. Residues 1-40 (MGSRNSSSAGSGSLEPSEGLSRRGAGLRRSEEEEEEDEDV) form a disordered region. Residues serine 73 and serine 75 each carry the phosphoserine modification. Residues 80–89 (DSAWDGRLGD) show a composition bias toward basic and acidic residues. The segment at 80–100 (DSAWDGRLGDRYNPPVDATPD) is disordered. WD repeat units lie at residues 170-210 (TYSQ…HKFK), 216-258 (DVGW…TALD), 263-302 (ERRF…RTLQ), 305-345 (SHED…EDDP), 353-392 (GHQD…SREG), 435-480 (GVLH…KKLT), and 481-520 (NHKA…YFQD).

Interacts with DDB1 and CUL4A.

It functions in the pathway protein modification; protein ubiquitination. May function as a substrate receptor for CUL4-DDB1 E3 ubiquitin-protein ligase complex. The protein is DDB1- and CUL4-associated factor 11 (Dcaf11) of Rattus norvegicus (Rat).